The following is a 705-amino-acid chain: MSHVLETDIAGRTLKVEYGKVGMLSNCAILVSYGDTVVLINANASKEPRDGIDFFPLSVEYEERLYSVGKIPGGFIKREGRPTENAILHARAIDRPLRPLFPKGYRNDVQIVCTVLSVESDNQPDILAMNGASLALCLSSIPFTTPVANVSVGLINGDFILNPTQSQREESILNLTVSATKERVMMIEAGAEEVDEDTMYNAIRFGFEQCQKIVEFQEEAMRRFGKEKVEPVLYLVDKDIEKEVREFAFPMVKEAMYISDKDLRNEKIDEVKEKVKEEFEEKYPENDSDISEALYKMQKEVVRNMILREKRRPDERAFDEIRKISCEVGLLPRTHGTGLFTRGLTQVMTAATIGPLADVQILDSIEDEEFKRYMHHYNFPSYSVGETRPLRGPGRREIGHGALAEKALEPLIPSEEDFPYTIRLVSEVLSSNGSTSQASVCGSTLALLDAGVPIKRPAAGIAMGLVTNDDLTEEKILTDIQGIEDFFGDMDFKVAGTEKGITALQVDTKISGLSDNCIKETLIKAKDARMYILGKIKECIPEHRAELSPYAPRVYTMTIAPEKIRDVIGAGGKTINKIIGETGVQIDIKEDGKIYVMSSDSVGANRALKMINDLTKDVEAGEIYLGKVTRTTNFGAFVEILPGKEGLVHISKLDFTRVNKVEDVVSVGDEILVKVTDIDDQGRINLSRRDAIKKEEDEKTKENNH.

D485 and D491 together coordinate Mg(2+). The KH domain occupies 552 to 611; it reads PRVYTMTIAPEKIRDVIGAGGKTINKIIGETGVQIDIKEDGKIYVMSSDSVGANRALKMI. Positions 621–689 constitute an S1 motif domain; it reads GEIYLGKVTR…DQGRINLSRR (69 aa).

It belongs to the polyribonucleotide nucleotidyltransferase family. Mg(2+) is required as a cofactor.

It is found in the cytoplasm. The catalysed reaction is RNA(n+1) + phosphate = RNA(n) + a ribonucleoside 5'-diphosphate. Functionally, involved in mRNA degradation. Catalyzes the phosphorolysis of single-stranded polyribonucleotides processively in the 3'- to 5'-direction. The polypeptide is Polyribonucleotide nucleotidyltransferase (Clostridium tetani (strain Massachusetts / E88)).